The sequence spans 191 residues: Mating-type-like protein ALPHA1 (191 aa).

Residues 118 to 174 (SKKRPMNAFMAFRTYYAQLGTGLKQNTLSVILSEAWNAPETDQNIWDIFAQQFNFAS) constitute a DNA-binding region (alpha box).

Belongs to the MATALPHA1 family.

It is found in the nucleus. Functionally, mating type proteins are sequence specific DNA-binding proteins that act as master switches in yeast differentiation by controlling gene expression in a cell type-specific fashion. Transcriptional activator that induces the transcription of alpha-specific genes. This chain is Mating-type-like protein ALPHA1 (MTL1ALPHA1), found in Candida glabrata (strain ATCC 2001 / BCRC 20586 / JCM 3761 / NBRC 0622 / NRRL Y-65 / CBS 138) (Yeast).